The following is a 390-amino-acid chain: Zinc transporter 7 (390 aa).

Over 1-37 (MLPLSIKDDEYKPPKFNLVRKVSGWIRSIFSDTTSRN) the chain is Cytoplasmic. Residues 38-58 (LFCFLCLNLSFAFVELFYGIW) traverse the membrane as a helical segment. Topologically, residues 59–67 (SNSLGLISD) are lumenal. Residues 68–88 (SFHMFFDCTALLAGLAASVIS) form a helical membrane-spanning segment. Residues 89–102 (RWKTNEAFSYGYVR) are Cytoplasmic-facing. Residues 103-123 (AEVLAGFVNGLFLIFTAFFIF) traverse the membrane as a helical segment. At 124–140 (SEGIERALDTPEVHHER) the chain is on the lumenal side. A helical membrane pass occupies residues 141–161 (LLPVSILGFLVNLIGIFVFQH). The his-rich loop stretch occupies residues 161–226 (HGGGHGHSHE…SHDQSHKHGH (66 aa)). The Cytoplasmic portion of the chain corresponds to 162–250 (GGGHGHSHES…TGSSKQILEG (89 aa)). Residues 167–243 (HSHESGHGHS…DEPPEEHTGS (77 aa)) form a disordered region. The span at 177–186 (HSLFNGSLSH) shows a compositional bias: low complexity. Basic residues predominate over residues 187–208 (GHSHSHGGSHGHSHGGGHGHSH). 2 stretches are compositionally biased toward basic and acidic residues: residues 209-222 (SHGE…DQSH) and 232-242 (CHDEPPEEHTG). The helical transmembrane segment at 251–271 (VFLHIVADALGSVGVIISTIL) threads the bilayer. Residues 272 to 276 (MQRYG) lie on the Lumenal side of the membrane. The helical transmembrane segment at 277–297 (LMIADPICSMLIALLIFVSVI) threads the bilayer. Over 298–390 (PLLKQSIGIL…LYVQIDMAAM (93 aa)) the chain is Cytoplasmic.

Belongs to the cation diffusion facilitator (CDF) transporter (TC 2.A.4) family. SLC30A subfamily. In terms of assembly, homooligomer.

It localises to the golgi apparatus membrane. It is found in the cytoplasmic vesicle. The protein resides in the golgi apparatus. The protein localises to the trans-Golgi network. Its subcellular location is the sarcoplasmic reticulum. It localises to the mitochondrion. The catalysed reaction is Zn(2+)(in) = Zn(2+)(out). Its function is as follows. Zinc ion transporter mediating zinc entry from the cytosol into the lumen of organelles along the secretory pathway. By contributing to zinc ion homeostasis within the early secretory pathway, regulates the activation and folding of enzymes like alkaline phosphatases. This Xenopus tropicalis (Western clawed frog) protein is Zinc transporter 7 (slc30a7).